A 429-amino-acid polypeptide reads, in one-letter code: Gamma-glutamyl phosphate reductase (429 aa).

It belongs to the gamma-glutamyl phosphate reductase family.

The protein resides in the cytoplasm. It carries out the reaction L-glutamate 5-semialdehyde + phosphate + NADP(+) = L-glutamyl 5-phosphate + NADPH + H(+). It participates in amino-acid biosynthesis; L-proline biosynthesis; L-glutamate 5-semialdehyde from L-glutamate: step 2/2. Its function is as follows. Catalyzes the NADPH-dependent reduction of L-glutamate 5-phosphate into L-glutamate 5-semialdehyde and phosphate. The product spontaneously undergoes cyclization to form 1-pyrroline-5-carboxylate. The chain is Gamma-glutamyl phosphate reductase from Methylocella silvestris (strain DSM 15510 / CIP 108128 / LMG 27833 / NCIMB 13906 / BL2).